Reading from the N-terminus, the 50-residue chain is Large ribosomal subunit protein bL33 (50 aa).

The protein belongs to the bacterial ribosomal protein bL33 family.

This is Large ribosomal subunit protein bL33 from Fusobacterium nucleatum subsp. nucleatum (strain ATCC 25586 / DSM 15643 / BCRC 10681 / CIP 101130 / JCM 8532 / KCTC 2640 / LMG 13131 / VPI 4355).